The following is a 118-amino-acid chain: UPF0295 protein BCG9842_B4782 (118 aa).

The next 2 helical transmembrane spans lie at 12–32 and 43–63; these read IRTF…LGVF and FMMV…WIGM.

The protein belongs to the UPF0295 family.

The protein localises to the cell membrane. This Bacillus cereus (strain G9842) protein is UPF0295 protein BCG9842_B4782.